The chain runs to 304 residues: MTEARIIDGKAFAADLRGRIGAAVEHLRTAYALVPGLAVVLVGENPASQLYVKNKGEQTREAGMHSVTHRLPVDTTQEQLLRLIGQLNADPSIHGILVQLPLPPQIDPAAVLAAIDPDKDVDGFHVVNAGRLAVGLPGLVPCTPLGCLMLLKDVVGDLRGLNAVVVGRSNIVGKPMANLLLQANATVTVAHSHTVDLPEVCRGADILIAAVGRPEMIRGSWIKEGAIVIDVGINRVPARDPAAAAAGKTRVVGDVAFEEAKGIAGAITPVPGGVGPMTIACLLLNTLTAACRSKGITPPDDLMP.

NADP(+) contacts are provided by residues 167-169, Ser192, and Ile233; that span reads GRS.

It belongs to the tetrahydrofolate dehydrogenase/cyclohydrolase family. Homodimer.

It carries out the reaction (6R)-5,10-methylene-5,6,7,8-tetrahydrofolate + NADP(+) = (6R)-5,10-methenyltetrahydrofolate + NADPH. The enzyme catalyses (6R)-5,10-methenyltetrahydrofolate + H2O = (6R)-10-formyltetrahydrofolate + H(+). It participates in one-carbon metabolism; tetrahydrofolate interconversion. In terms of biological role, catalyzes the oxidation of 5,10-methylenetetrahydrofolate to 5,10-methenyltetrahydrofolate and then the hydrolysis of 5,10-methenyltetrahydrofolate to 10-formyltetrahydrofolate. The polypeptide is Bifunctional protein FolD (Rhodospirillum centenum (strain ATCC 51521 / SW)).